A 135-amino-acid polypeptide reads, in one-letter code: Large ribosomal subunit protein mL41 (135 aa).

The transit peptide at 1-13 (MGFLTAVTQGLVR) directs the protein to the mitochondrion.

This sequence belongs to the mitochondrion-specific ribosomal protein mL41 family. As to quaternary structure, component of the mitochondrial ribosome large subunit (39S) which comprises a 16S rRNA and about 50 distinct proteins. Interacts with BCL2.

The protein localises to the mitochondrion. In terms of biological role, component of the mitochondrial ribosome large subunit. Also involved in apoptosis and cell cycle. Enhances p53/TP53 stability, thereby contributing to p53/TP53-induced apoptosis in response to growth-inhibitory condition. Enhances p53/TP53 translocation to the mitochondria. Has the ability to arrest the cell cycle at the G1 phase, possibly by stabilizing the CDKN1A and CDKN1B (p27Kip1) proteins. In Mus musculus (Mouse), this protein is Large ribosomal subunit protein mL41 (Mrpl41).